Here is a 180-residue protein sequence, read N- to C-terminus: Large ribosomal subunit protein uL5 (180 aa).

This sequence belongs to the universal ribosomal protein uL5 family. In terms of assembly, part of the 50S ribosomal subunit; part of the 5S rRNA/L5/L18/L25 subcomplex. Contacts the 5S rRNA and the P site tRNA. Forms a bridge to the 30S subunit in the 70S ribosome.

This is one of the proteins that bind and probably mediate the attachment of the 5S RNA into the large ribosomal subunit, where it forms part of the central protuberance. In the 70S ribosome it contacts protein S13 of the 30S subunit (bridge B1b), connecting the 2 subunits; this bridge is implicated in subunit movement. Contacts the P site tRNA; the 5S rRNA and some of its associated proteins might help stabilize positioning of ribosome-bound tRNAs. The chain is Large ribosomal subunit protein uL5 from Ralstonia nicotianae (strain ATCC BAA-1114 / GMI1000) (Ralstonia solanacearum).